The sequence spans 611 residues: Protein spaetzle 3 (611 aa).

Positions 1–14 are cleaved as a signal peptide; the sequence is MALTNFSLPFGALG. N-linked (GlcNAc...) asparagine glycosylation is present at asparagine 5. The tract at residues 57–322 is disordered; the sequence is EYFKNNPYAP…NDKSNNNQMP (266 aa). Composition is skewed to low complexity over residues 104–120, 127–153, and 169–185; these read QQVQ…QHQQ, SVSF…LTQT, and PGQQ…QQKQ. Residues 191-210 show a composition bias toward polar residues; that stretch reads GSASATFTKNSGSFSITSFG. Residues 218-239 show a composition bias toward pro residues; that stretch reads PPQPQQPPPSQQQQPPPAPPPQ. Residues 288–306 show a composition bias toward acidic residues; the sequence is YDVEEGEEDEEEDGEEEGQ. Asparagine 335 and asparagine 351 each carry an N-linked (GlcNAc...) asparagine glycan. Positions 477 to 518 are disordered; it reads KKRQAAAGGSRNRGGSAGGSGNGNTNANRQPGNKNGSSGTGR. Over residues 487–498 the composition is skewed to gly residues; it reads RNRGGSAGGSGN. Asparagine 511 is a glycosylation site (N-linked (GlcNAc...) asparagine). Residues 521-609 enclose the Spaetzle domain; the sequence is ACESKIEIVT…LFPSCCVCRC (89 aa). 3 disulfides stabilise this stretch: cysteine 522–cysteine 573, cysteine 559–cysteine 605, and cysteine 567–cysteine 607.

In terms of assembly, homodimer; disulfide-linked.

Neurotrophin which may function as a ligand to the Toll-related receptor Tollo. Involved in a Tollo and JNK signaling pathway that positively regulates neuromuscular junction (NMJ) growth in presynaptic motorneurons. May function by activating Tollo to promote the phosphorylation of JNK. This chain is Protein spaetzle 3, found in Drosophila melanogaster (Fruit fly).